Here is an 854-residue protein sequence, read N- to C-terminus: DNA topoisomerase 1 type prokaryotic (854 aa).

Positions serine 2–lysine 110 constitute a Toprim domain. 2 residues coordinate Mg(2+): glutamate 8 and aspartate 79. In terms of domain architecture, Topo IA-type catalytic spans aspartate 124–valine 610. The interval serine 158–glutamine 163 is interaction with DNA. Residue tyrosine 302 is the O-(5'-phospho-DNA)-tyrosine intermediate of the active site. The segment at lysine 802–lysine 854 is disordered. Residues lysine 814–serine 834 are compositionally biased toward low complexity. A compositionally biased stretch (basic residues) spans threonine 835–lysine 854.

It belongs to the type IA topoisomerase family. Mg(2+) serves as cofactor.

It is found in the virion. The catalysed reaction is ATP-independent breakage of single-stranded DNA, followed by passage and rejoining.. Releases the supercoiling and torsional tension of DNA, which is introduced during the DNA replication and transcription, by transiently cleaving and rejoining one strand of the DNA duplex. Introduces a single-strand break via transesterification at a target site in duplex DNA. The scissile phosphodiester is attacked by the catalytic tyrosine of the enzyme, resulting in the formation of a DNA-(5'-phosphotyrosyl)-enzyme intermediate and the expulsion of a 3'-OH DNA strand. The free DNA strand then undergoes passage around the unbroken strand, thus removing DNA supercoils. Finally, in the religation step, the DNA 3'-OH attacks the covalent intermediate to expel the active-site tyrosine and restore the DNA phosphodiester backbone. In Acanthamoeba polyphaga (Amoeba), this protein is DNA topoisomerase 1 type prokaryotic (TOP1P).